The chain runs to 87 residues: Potassium channel toxin Ttr-beta-KTx (87 aa).

The first 19 residues, 1-19, serve as a signal peptide directing secretion; it reads MERKWALLLFLGMVTLVSC. A propeptide spanning residues 20 to 27 is cleaved from the precursor; that stretch reads GLREKHVQ. Residues 53–87 form the BetaSPN-type CS-alpha/beta domain; that stretch reads QFGCPAYEGYCNNHCQDIKRKDGECHGFKCKCAKD. Intrachain disulfides connect C56–C77, C63–C82, and C67–C84.

This sequence belongs to the long chain scorpion toxin family. Class 1 subfamily. Expressed by the venom gland.

The protein localises to the secreted. In terms of biological role, inhibits voltage-gated potassium channel. The protein is Potassium channel toxin Ttr-beta-KTx of Tityus trivittatus (Argentinean scorpion).